Consider the following 170-residue polypeptide: uncharacterized protein (170 aa).

This is an uncharacterized protein from Acidithiobacillus ferrooxidans (Thiobacillus ferrooxidans).